The primary structure comprises 373 residues: Spermidine/putrescine import ATP-binding protein PotA (373 aa).

Residues 8-238 (FELRGVSKYF…PANLYVARFV (231 aa)) form the ABC transporter domain. 40-47 (GPSGCGKT) lines the ATP pocket.

It belongs to the ABC transporter superfamily. Spermidine/putrescine importer (TC 3.A.1.11.1) family. The complex is composed of two ATP-binding proteins (PotA), two transmembrane proteins (PotB and PotC) and a solute-binding protein (PotD).

It is found in the cell inner membrane. The enzyme catalyses ATP + H2O + polyamine-[polyamine-binding protein]Side 1 = ADP + phosphate + polyamineSide 2 + [polyamine-binding protein]Side 1.. Functionally, part of the ABC transporter complex PotABCD involved in spermidine/putrescine import. Responsible for energy coupling to the transport system. This chain is Spermidine/putrescine import ATP-binding protein PotA, found in Oleidesulfovibrio alaskensis (strain ATCC BAA-1058 / DSM 17464 / G20) (Desulfovibrio alaskensis).